Here is a 324-residue protein sequence, read N- to C-terminus: Clavaminate synthase 1 (324 aa).

Residues His-144, Glu-146, and His-279 each contribute to the Fe cation site. Arg-293 lines the 2-oxoglutarate pocket.

The protein belongs to the clavaminate synthase family. Fe(2+) serves as cofactor.

The catalysed reaction is deoxyamidinoproclavaminate + 2-oxoglutarate + O2 = amidinoproclavaminate + succinate + CO2. It catalyses the reaction proclavaminate + 2-oxoglutarate + O2 = dihydroclavaminate + succinate + CO2 + H2O. It carries out the reaction dihydroclavaminate + 2-oxoglutarate + O2 = clavaminate + succinate + CO2 + H2O. The protein operates within antibiotic biosynthesis; clavulanate biosynthesis; clavulanate from D-glyceraldehyde 3-phosphate and L-arginine: step 3/8. It participates in antibiotic biosynthesis; clavulanate biosynthesis; clavulanate from D-glyceraldehyde 3-phosphate and L-arginine: step 5/8. It functions in the pathway antibiotic biosynthesis; clavulanate biosynthesis; clavulanate from D-glyceraldehyde 3-phosphate and L-arginine: step 6/8. The chain is Clavaminate synthase 1 (cs1) from Streptomyces clavuligerus.